A 336-amino-acid chain; its full sequence is Ornithine carbamoyltransferase, catabolic (336 aa).

Carbamoyl phosphate is bound by residues 57–60, Q84, R108, and 135–138; these read STRT and HPTQ. L-ornithine contacts are provided by residues N168, D232, and 236 to 237; that span reads SM. Carbamoyl phosphate is bound by residues 274–275 and R321; that span reads CL.

This sequence belongs to the aspartate/ornithine carbamoyltransferase superfamily. OTCase family.

The protein localises to the cytoplasm. It carries out the reaction carbamoyl phosphate + L-ornithine = L-citrulline + phosphate + H(+). It functions in the pathway amino-acid degradation; L-arginine degradation via ADI pathway; carbamoyl phosphate from L-arginine: step 2/2. Functionally, reversibly catalyzes the transfer of the carbamoyl group from carbamoyl phosphate (CP) to the N(epsilon) atom of ornithine (ORN) to produce L-citrulline. The polypeptide is Ornithine carbamoyltransferase, catabolic (Burkholderia mallei (strain ATCC 23344)).